The following is a 166-amino-acid chain: NAD(P)H-quinone oxidoreductase subunit I, chloroplastic (166 aa).

2 4Fe-4S ferredoxin-type domains span residues 55-84 (GRIH…VDWK) and 95-124 (LNYS…MTEE). The [4Fe-4S] cluster site is built by Cys-64, Cys-67, Cys-70, Cys-74, Cys-104, Cys-107, Cys-110, and Cys-114.

This sequence belongs to the complex I 23 kDa subunit family. NDH is composed of at least 16 different subunits, 5 of which are encoded in the nucleus. [4Fe-4S] cluster is required as a cofactor.

Its subcellular location is the plastid. It is found in the chloroplast thylakoid membrane. The catalysed reaction is a plastoquinone + NADH + (n+1) H(+)(in) = a plastoquinol + NAD(+) + n H(+)(out). It carries out the reaction a plastoquinone + NADPH + (n+1) H(+)(in) = a plastoquinol + NADP(+) + n H(+)(out). Its function is as follows. NDH shuttles electrons from NAD(P)H:plastoquinone, via FMN and iron-sulfur (Fe-S) centers, to quinones in the photosynthetic chain and possibly in a chloroplast respiratory chain. The immediate electron acceptor for the enzyme in this species is believed to be plastoquinone. Couples the redox reaction to proton translocation, and thus conserves the redox energy in a proton gradient. The chain is NAD(P)H-quinone oxidoreductase subunit I, chloroplastic from Oteiza scandens (Climbing oteiza).